Consider the following 439-residue polypeptide: Ribosomal protein uS12 methylthiotransferase RimO (439 aa).

The MTTase N-terminal domain occupies 7–119; it reads KQLCLISLGC…IDILIAKKQN (113 aa). Positions 16, 50, 82, 151, 155, and 158 each coordinate [4Fe-4S] cluster. In terms of domain architecture, Radical SAM core spans 137–368; that stretch reads TGSSVHAYVK…ALKHQNHSFK (232 aa).

This sequence belongs to the methylthiotransferase family. RimO subfamily. Requires [4Fe-4S] cluster as cofactor.

Its subcellular location is the cytoplasm. It carries out the reaction L-aspartate(89)-[ribosomal protein uS12]-hydrogen + (sulfur carrier)-SH + AH2 + 2 S-adenosyl-L-methionine = 3-methylsulfanyl-L-aspartate(89)-[ribosomal protein uS12]-hydrogen + (sulfur carrier)-H + 5'-deoxyadenosine + L-methionine + A + S-adenosyl-L-homocysteine + 2 H(+). Functionally, catalyzes the methylthiolation of an aspartic acid residue of ribosomal protein uS12. The polypeptide is Ribosomal protein uS12 methylthiotransferase RimO (Helicobacter pylori (strain HPAG1)).